Reading from the N-terminus, the 522-residue chain is MNSLGGIRSWPANWRSTTASMTTTESVRKVPQVLTVAGSDSGAGAGIQADLKVCAARGVYCASVITAVTAQNTRGVQSVHLLPPEFISEQLKSVLSDFEFDVVKTGMLPSTEIVEVLLQNLSDFPVRALVVDPVMVSTSGHVLAGSSILSIFRERLLPIADIITPNVKEASALLDGFRIETVAEMRSAAKSLHEMGPRFVLVKGGDLPDSSDSVDVYFDGKEFHELRSPRIATRNTHGTGCTLASCIAAELAKGSSMLSAVKVAKRFVDNALDYSKDIVIGSGMQGPFDHFFGLKKDPQSSRCSIFNPDDLFLYAVTDSRMNKKWNRSIVDALKAAIEGGATIIQLREKEAETREFLEEAKACIDICRSHGVSLLINDRIDIALACDADGVHVGQSDMPVDLVRSLLGPDKIIGVSCKTPEQAHQAWKDGADYIGSGGVFPTNTKANNRTIGLDGLKEVCEASKLPVVAIGGIGISNAGSVMQIDAPNLKGVAVVSALFDQDCVLTQAKKLHKTLKESKRGI.

Residues 1-36 constitute a chloroplast transit peptide; the sequence is MNSLGGIRSWPANWRSTTASMTTTESVRKVPQVLTV. Residues 345-349 and N377 contribute to the 4-amino-2-methyl-5-(diphosphooxymethyl)pyrimidine site; that span reads QLREK. Residues D378 and D397 each coordinate Mg(2+). Position 416 (S416) interacts with 4-amino-2-methyl-5-(diphosphooxymethyl)pyrimidine. 442-444 contacts 2-[(2R,5Z)-2-carboxy-4-methylthiazol-5(2H)-ylidene]ethyl phosphate; it reads TNT. Position 445 (K445) interacts with 4-amino-2-methyl-5-(diphosphooxymethyl)pyrimidine. Residues G472 and 495–496 each bind 2-[(2R,5Z)-2-carboxy-4-methylthiazol-5(2H)-ylidene]ethyl phosphate; that span reads VS.

This sequence belongs to the thiamine-phosphate synthase family. Mg(2+) serves as cofactor.

It is found in the plastid. The protein localises to the chloroplast. The enzyme catalyses 2-[(2R,5Z)-2-carboxy-4-methylthiazol-5(2H)-ylidene]ethyl phosphate + 4-amino-2-methyl-5-(diphosphooxymethyl)pyrimidine + 2 H(+) = thiamine phosphate + CO2 + diphosphate. The catalysed reaction is 2-(2-carboxy-4-methylthiazol-5-yl)ethyl phosphate + 4-amino-2-methyl-5-(diphosphooxymethyl)pyrimidine + 2 H(+) = thiamine phosphate + CO2 + diphosphate. It carries out the reaction 4-methyl-5-(2-phosphooxyethyl)-thiazole + 4-amino-2-methyl-5-(diphosphooxymethyl)pyrimidine + H(+) = thiamine phosphate + diphosphate. It catalyses the reaction 4-amino-5-hydroxymethyl-2-methylpyrimidine + ATP = 4-amino-2-methyl-5-(phosphooxymethyl)pyrimidine + ADP + H(+). Its pathway is cofactor biosynthesis; thiamine diphosphate biosynthesis; thiamine phosphate from 4-amino-2-methyl-5-diphosphomethylpyrimidine and 4-methyl-5-(2-phosphoethyl)-thiazole: step 1/1. It functions in the pathway cofactor biosynthesis; thiamine diphosphate biosynthesis; 4-amino-2-methyl-5-diphosphomethylpyrimidine from 5-amino-1-(5-phospho-D-ribosyl)imidazole: step 2/3. Its function is as follows. Essential for thiamine biosynthesis. Bifunctional enzyme that catalyzes the phosphorylation of hydroxymethylpyrimidine phosphate (HMP-P) to HMP-PP and condenses 4-methyl-5-(beta-hydroxyethyl)thiazole monophosphate (THZ-P) and 2-methyl-4-amino-5-hydroxymethyl pyrimidine pyrophosphate (HMP-PP) to form thiamine monophosphate (TMP). The polypeptide is Thiamine biosynthetic bifunctional enzyme TH1, chloroplastic (TH1) (Arabidopsis thaliana (Mouse-ear cress)).